The sequence spans 254 residues: Leucyl/phenylalanyl-tRNA--protein transferase (254 aa).

The protein belongs to the L/F-transferase family.

Its subcellular location is the cytoplasm. The catalysed reaction is N-terminal L-lysyl-[protein] + L-leucyl-tRNA(Leu) = N-terminal L-leucyl-L-lysyl-[protein] + tRNA(Leu) + H(+). It carries out the reaction N-terminal L-arginyl-[protein] + L-leucyl-tRNA(Leu) = N-terminal L-leucyl-L-arginyl-[protein] + tRNA(Leu) + H(+). It catalyses the reaction L-phenylalanyl-tRNA(Phe) + an N-terminal L-alpha-aminoacyl-[protein] = an N-terminal L-phenylalanyl-L-alpha-aminoacyl-[protein] + tRNA(Phe). Its function is as follows. Functions in the N-end rule pathway of protein degradation where it conjugates Leu, Phe and, less efficiently, Met from aminoacyl-tRNAs to the N-termini of proteins containing an N-terminal arginine or lysine. In Burkholderia vietnamiensis (strain G4 / LMG 22486) (Burkholderia cepacia (strain R1808)), this protein is Leucyl/phenylalanyl-tRNA--protein transferase.